Consider the following 243-residue polypeptide: Small ribosomal subunit protein uS3 (243 aa).

One can recognise a KH type-2 domain in the interval 39-110 (IRTFIEKKYG…QVRINVVEVE (72 aa)). Residues 216–243 (QTIPVGANPKRKASRRPQQFEDRSNENS) are disordered. The span at 233-243 (QQFEDRSNENS) shows a compositional bias: basic and acidic residues.

It belongs to the universal ribosomal protein uS3 family. In terms of assembly, part of the 30S ribosomal subunit. Forms a tight complex with proteins S10 and S14.

Functionally, binds the lower part of the 30S subunit head. Binds mRNA in the 70S ribosome, positioning it for translation. In Prochlorococcus marinus (strain MIT 9215), this protein is Small ribosomal subunit protein uS3.